The chain runs to 182 residues: Plasmolipin (182 aa).

Topologically, residues 1–35 (MAEFPSKVSTRTSSPAQGAEASVSALRPDLGFVRS) are cytoplasmic. Serine 9 bears the Phosphoserine mark. The MARVEL domain occupies 32-166 (FVRSRLGALM…SAFFSYQAWR (135 aa)). A helical transmembrane segment spans residues 36-56 (RLGALMLLQLVLGLLVWALIA). Topologically, residues 57–68 (DTPYHLYPAYGW) are extracellular. A helical membrane pass occupies residues 69-89 (VMFVAVFLWLVTIVLFNLYLF). At 90 to 99 (QLHMKLYMVP) the chain is on the cytoplasmic side. The chain crosses the membrane as a helical span at residues 100-120 (WPLVLMIFNISATVLYITAFI). Topologically, residues 121-141 (ACSAAVDLTSLRGTRPYNQRA) are extracellular. Residues 142 to 162 (AASFFACLVMIAYGVSAFFSY) form a helical membrane-spanning segment. Over 163 to 182 (QAWRGVGSNAATSQMAGGYA) the chain is Cytoplasmic.

It belongs to the MAL family. Forms oligomers. Phosphorylated.

The protein resides in the cell membrane. Its subcellular location is the myelin membrane. It localises to the apical cell membrane. It is found in the golgi apparatus. Its function is as follows. Main component of the myelin sheath that plays an important role in myelin membrane biogenesis and myelination. Plays an essential function in apical endocytosis. Regulates epithelial development through the regulation of apical endocytosis. Part of the intracellular machinery that mediates basolateral-to-apical transport of ICAM-1, an essential adhesion receptor in epithelial cells, from the subapical compartment in hepatic epithelial cells. The protein is Plasmolipin of Homo sapiens (Human).